The sequence spans 885 residues: MKASEIRKAFLDFFAQRGHSVVKSSSVIPHDDPSLLFTNAGMVQFKRTFLGEEKRPYNRAATSQKCMRAGGKHNDLENVGRTARHHTFFEMLGNFSFGDYFKEDAVEYAWRFLTEDMGLPREKLYATIHEGDSEMRLGPDEEARGFWARYLPADRILTFPTKDNFWSMGDTGPCGPCSEILIDQGAHVGCGKPDCRPGCDCDRFLELWNLVFMQFNRKEDGTMEPLPKPSIDTGMGLERVAAVIQKVPSNYDTDLFAPMRAKIAELSGYRYGTDPEKDVSVKVIADHGRAAAFLIGDGALPSNEGRGYVLRRVLRRALRHGRFLGLDRPFLSEVAVAVMESMQDAYPELLESRNFITRVILNEEERFNETLDNGLRLLQNEIRRLRDEGAGTIPGALIFKLYDTYGFPIDIITDMARDLDFKVDEAGFADLMEKQKEQSRMHWKGSGEREVSEAYRQLSAEGVSTRFVGYDTLSAQSTIAALVRDGQAVEEAPAGTDVEVVTSETPFYGAAGGQVGDQGVIVGPSSRVIVSDTLKLPGDLIVHVGKVESGRLRVGETVRLEVDQALRGDTALHHTATHLLHSVLRRVLGDHVKQAGSMVAPDRLRFDFTHFAAISRDELAEIERLVNEQIRVNRDLQVREMNLDEALKTGAMALFEEKYGDRVRMVEIPGFSRELCGGTHTHRTGDIGLFVVTQEMSIASGVRRIEALAGRRALDYLGRQQSVLHQAAGLLKAGPFEVAERVEKLLANQKQMEKELEALKSSLTSKRSADLLEQAEEVGGVKVLVMRVEADDPKALREMNDRFKERLSSGVTVLGAHQGDKAFLLVGVTPDLTSRVHAGNLIKEIVKTIGGSGGGRPDMAQAGGNRPEKLQDALDLARKLLRERL.

Positions 574, 578, 676, and 680 each coordinate Zn(2+).

The protein belongs to the class-II aminoacyl-tRNA synthetase family. Zn(2+) serves as cofactor.

The protein resides in the cytoplasm. The catalysed reaction is tRNA(Ala) + L-alanine + ATP = L-alanyl-tRNA(Ala) + AMP + diphosphate. Its function is as follows. Catalyzes the attachment of alanine to tRNA(Ala) in a two-step reaction: alanine is first activated by ATP to form Ala-AMP and then transferred to the acceptor end of tRNA(Ala). Also edits incorrectly charged Ser-tRNA(Ala) and Gly-tRNA(Ala) via its editing domain. The chain is Alanine--tRNA ligase from Syntrophobacter fumaroxidans (strain DSM 10017 / MPOB).